The primary structure comprises 723 residues: Pentatricopeptide repeat-containing protein At5g50280, chloroplastic (723 aa).

A chloroplast-targeting transit peptide spans 1 to 44 (MSMASSSLATQSFFSSFPLSHRLHFPVPYLLLRSSFFRKPLSLS). Positions 70–97 (IQQPENSTINSEESECEEEDDEEGDDFT) are disordered. Residues 81–97 (EESECEEEDDEEGDDFT) are compositionally biased toward acidic residues. 11 PPR repeats span residues 272-306 (DVRLYNAAISGLSASQRYDDAWEVYEAMDKINVYP), 307-342 (DNVTCAILITTLRKAGRSAKEVWEIFEKMSEKGVKW), 343-377 (SQDVFGGLVKSFCDEGLKEEALVIQTEMEKKGIRS), 378-412 (NTIVYNTLMDAYNKSNHIEEVEGLFTEMRDKGLKP), 413-447 (SAATYNILMDAYARRMQPDIVETLLREMEDLGLEP), 448-483 (NVKSYTCLISAYGRTKKMSDMAADAFLRMKKVGLKP), 484-518 (SSHSYTALIHAYSVSGWHEKAYASFEEMCKEGIKP), 519-553 (SVETYTSVLDAFRRSGDTGKLMEIWKLMLREKIKG), 554-588 (TRITYNTLLDGFAKQGLYIEARDVVSEFSKMGLQP), 589-623 (SVMTYNMLMNAYARGGQDAKLPQLLKEMAALNLKP), and 624-658 (DSITYSTMIYAFVRVRDFKRAFFYHKMMVKSGQVP). Residues 700–723 (TKGKKDEFWKYKTNRTTSPGRHRS) are disordered. Residues 713 to 723 (NRTTSPGRHRS) show a composition bias toward polar residues.

Belongs to the PPR family. P subfamily.

The protein resides in the plastid. It is found in the chloroplast. The sequence is that of Pentatricopeptide repeat-containing protein At5g50280, chloroplastic (EMB1006) from Arabidopsis thaliana (Mouse-ear cress).